Here is a 187-residue protein sequence, read N- to C-terminus: Holliday junction resolvase (187 aa).

It belongs to the RuvC family. Poxviruses-type subfamily. Mg(2+) is required as a cofactor. In terms of processing, acylated by palmitic acid group(s).

It is found in the membrane. Its function is as follows. Nuclease that specifically cleaves and resolves four-way DNA Holliday junctions into linear duplex products. The sequence is that of Holliday junction resolvase from Vaccinia virus (strain Ankara) (VACV).